The chain runs to 248 residues: Trypsin I-P38 (248 aa).

An N-terminal signal peptide occupies residues 1-15 (MKFLVLVAFLGVAVA). Positions 16–25 (FPISDEDDDK) are cleaved as a propeptide — activation peptide. The region spanning 26 to 246 (IVGGYSCARS…YVSWIKTTMS (221 aa)) is the Peptidase S1 domain. Disulfide bonds link Cys32/Cys162, Cys50/Cys66, Cys134/Cys235, Cys141/Cys208, Cys173/Cys187, and Cys198/Cys222. The active-site Charge relay system is His65. 3 residues coordinate Ca(2+): Glu77, Asn79, and Glu87. Residue Asp109 is the Charge relay system of the active site. The Charge relay system role is filled by Ser202.

It belongs to the peptidase S1 family. Requires Ca(2+) as cofactor. In terms of tissue distribution, high levels are seen in the pancreas while lower levels are found in the liver, spleen and thymus.

It is found in the secreted. It localises to the extracellular space. The enzyme catalyses Preferential cleavage: Arg-|-Xaa, Lys-|-Xaa.. In Gallus gallus (Chicken), this protein is Trypsin I-P38.